The chain runs to 336 residues: HTH-type transcriptional repressor PurR (336 aa).

The HTH lacI-type domain occupies 2-56 (ATIKDVAKMAGVSTTTVSHVINKTRFVAKDTEEAVLSAIKQLNYSPSAVARSLKV). Positions 4-23 (IKDVAKMAGVSTTTVSHVIN) form a DNA-binding region, H-T-H motif. The DNA-binding element occupies 48–56 (SAVARSLKV). Residues tyrosine 73, lysine 188, threonine 190, phenylalanine 219, and aspartate 273 each coordinate hypoxanthine.

Homodimer.

Its pathway is purine metabolism; purine nucleotide biosynthesis [regulation]. Its function is as follows. Is the main repressor of the genes involved in the de novo synthesis of purine nucleotides, regulating purB, purC, purEK, purF, purHD, purL, purMN and guaBA expression. PurR is allosterically activated to bind its cognate DNA by binding the purine corepressors, hypoxanthine or guanine, thereby effecting transcription repression. In Haemophilus influenzae (strain ATCC 51907 / DSM 11121 / KW20 / Rd), this protein is HTH-type transcriptional repressor PurR.